The primary structure comprises 68 residues: Figainin 1 (68 aa).

The N-terminal stretch at 1 to 22 is a signal peptide; the sequence is MAFLKKSLFLVLFLGLVSLSIG. Residues 23 to 45 form a disordered region; sequence EEEKREEEEKNEEGANQEENAEN. Residues 23-47 constitute a propeptide that is removed on maturation; the sequence is EEEKREEEEKNEEGANQEENAENKE. Residues 26–42 show a composition bias toward acidic residues; the sequence is KREEEEKNEEGANQEEN. Lys67 bears the Lysine amide mark.

In terms of tissue distribution, expressed by the skin glands.

Its subcellular location is the secreted. Antimicrobial peptide that displays antibacterial and antiprotozoal activity. Exhibits antibacterial activity against the Gram-positive bacteria S.epidermidis ATCC 12228 (MIC=2 uM), E.casseliflavus ATCC 700327 (MIC=16 uM), S.aureus ATCC 25923 (MIC=4 uM) and E.faecalis ATCC 29212 (MIC=8 uM), and the Gram-negative bacteria E.coli ATCC 25922 (MIC=16 uM) and K.pneumoniae ATCC 13883 (MIC=4 uM). Displays antiprotozoal activity against the epimastigote form of T.cruzi (IC(50)=15.9 uM). Does not show antimicrobial activity against the Gram-negative bacterium P.aeruginosa ATCC 27853, or the fungi C.albicans ATCC 90028 and C.parapsilosis ATCC 22019. Shows high cytolytic activity against human erythrocytes (HC(50)=10 uM), and displays anti-proliferative effects against various cancer cell lines including MCF-7 breast cancer cells (IC(50)=13.7 uM), HeLa cervical adenocarcinoma cells (IC(50)=11.1 uM) and B16F10 murine melanoma cells (IC(50)=10.5 uM). The chain is Figainin 1 from Boana raniceps (Chaco tree frog).